Reading from the N-terminus, the 271-residue chain is tRNA pseudouridine synthase A (271 aa).

The Nucleophile role is filled by D52. Y110 is a binding site for substrate.

It belongs to the tRNA pseudouridine synthase TruA family. In terms of assembly, homodimer.

It carries out the reaction uridine(38/39/40) in tRNA = pseudouridine(38/39/40) in tRNA. Its function is as follows. Formation of pseudouridine at positions 38, 39 and 40 in the anticodon stem and loop of transfer RNAs. The chain is tRNA pseudouridine synthase A from Maridesulfovibrio salexigens (strain ATCC 14822 / DSM 2638 / NCIMB 8403 / VKM B-1763) (Desulfovibrio salexigens).